A 483-amino-acid polypeptide reads, in one-letter code: Altronate oxidoreductase (483 aa).

18–29 serves as a coordination point for NAD(+); sequence IIQFGEGNFLRA.

The protein belongs to the mannitol dehydrogenase family. UxaB subfamily.

It carries out the reaction D-altronate + NAD(+) = keto-D-tagaturonate + NADH + H(+). The protein operates within carbohydrate metabolism; pentose and glucuronate interconversion. In Escherichia coli O157:H7, this protein is Altronate oxidoreductase (uxaB).